The primary structure comprises 129 residues: Large ribosomal subunit protein bL20 (129 aa).

The protein belongs to the bacterial ribosomal protein bL20 family.

Binds directly to 23S ribosomal RNA and is necessary for the in vitro assembly process of the 50S ribosomal subunit. It is not involved in the protein synthesizing functions of that subunit. This chain is Large ribosomal subunit protein bL20, found in Mycolicibacterium gilvum (strain PYR-GCK) (Mycobacterium gilvum (strain PYR-GCK)).